The following is a 359-amino-acid chain: Phospho-N-acetylmuramoyl-pentapeptide-transferase (359 aa).

Helical transmembrane passes span 26–46 (TIYG…WVIN), 73–93 (TMGG…WADL), 98–118 (ILIT…DDYL), 134–154 (FLVQ…CPDF), 166–186 (FTPD…VGTS), 197–217 (GLAI…AYVA), 234–254 (CGEI…FLWF), 261–281 (VFMG…IAVI), 286–306 (ILLL…IIQV), and 338–358 (IVRF…TLKI).

This sequence belongs to the glycosyltransferase 4 family. MraY subfamily. Requires Mg(2+) as cofactor.

The protein resides in the cell inner membrane. The catalysed reaction is UDP-N-acetyl-alpha-D-muramoyl-L-alanyl-gamma-D-glutamyl-meso-2,6-diaminopimeloyl-D-alanyl-D-alanine + di-trans,octa-cis-undecaprenyl phosphate = di-trans,octa-cis-undecaprenyl diphospho-N-acetyl-alpha-D-muramoyl-L-alanyl-D-glutamyl-meso-2,6-diaminopimeloyl-D-alanyl-D-alanine + UMP. It participates in cell wall biogenesis; peptidoglycan biosynthesis. Catalyzes the initial step of the lipid cycle reactions in the biosynthesis of the cell wall peptidoglycan: transfers peptidoglycan precursor phospho-MurNAc-pentapeptide from UDP-MurNAc-pentapeptide onto the lipid carrier undecaprenyl phosphate, yielding undecaprenyl-pyrophosphoryl-MurNAc-pentapeptide, known as lipid I. The protein is Phospho-N-acetylmuramoyl-pentapeptide-transferase of Desulforapulum autotrophicum (strain ATCC 43914 / DSM 3382 / VKM B-1955 / HRM2) (Desulfobacterium autotrophicum).